The primary structure comprises 240 residues: MGKRLISQNRGRGTPKYRSPSHKRKGEVKYRSYDEMEKVGKVLGTVIDVLHDPGRSAPVAKVRFANGEERLVLIPEGISVGEQIECGISAEIKPGNVLPLGEIPEGIPVYNIETIPGDGGKLVRAGGCYAHVVAHDIGKTIVKLPSGYAKVLNPACRATIGVVAGGGRKEKPFVKAGKKHHSLSAKAVAWPKVRGVAMNAVDHPYGGGRHQHLGKPSSVSRNTSPGRKVGHIASRRTGRK.

Over residues 1-11 (MGKRLISQNRG) the composition is skewed to polar residues. 2 disordered regions span residues 1-26 (MGKR…KRKG) and 206-240 (GGGR…TGRK). 2 stretches are compositionally biased toward basic residues: residues 13-26 (GTPK…KRKG) and 228-240 (KVGH…TGRK).

Belongs to the universal ribosomal protein uL2 family. In terms of assembly, part of the 50S ribosomal subunit. Forms a bridge to the 30S subunit in the 70S ribosome.

Functionally, one of the primary rRNA binding proteins. Required for association of the 30S and 50S subunits to form the 70S ribosome, for tRNA binding and peptide bond formation. It has been suggested to have peptidyltransferase activity; this is somewhat controversial. Makes several contacts with the 16S rRNA in the 70S ribosome. This Methanococcus vannielii (strain ATCC 35089 / DSM 1224 / JCM 13029 / OCM 148 / SB) protein is Large ribosomal subunit protein uL2.